The following is a 396-amino-acid chain: 1-deoxy-D-xylulose 5-phosphate reductoisomerase (396 aa).

Positions 15, 16, 17, 18, 41, and 129 each coordinate NADPH. Residue Lys130 participates in 1-deoxy-D-xylulose 5-phosphate binding. Residue Glu131 coordinates NADPH. Asp155 serves as a coordination point for Mn(2+). The 1-deoxy-D-xylulose 5-phosphate site is built by Ser156, Glu157, Ser182, and His205. Glu157 contacts Mn(2+). Gly211 lines the NADPH pocket. 1-deoxy-D-xylulose 5-phosphate is bound by residues Ser218, Asn223, Lys224, and Glu227. Glu227 lines the Mn(2+) pocket.

Belongs to the DXR family. It depends on Mg(2+) as a cofactor. Mn(2+) serves as cofactor.

The enzyme catalyses 2-C-methyl-D-erythritol 4-phosphate + NADP(+) = 1-deoxy-D-xylulose 5-phosphate + NADPH + H(+). It functions in the pathway isoprenoid biosynthesis; isopentenyl diphosphate biosynthesis via DXP pathway; isopentenyl diphosphate from 1-deoxy-D-xylulose 5-phosphate: step 1/6. Catalyzes the NADPH-dependent rearrangement and reduction of 1-deoxy-D-xylulose-5-phosphate (DXP) to 2-C-methyl-D-erythritol 4-phosphate (MEP). This chain is 1-deoxy-D-xylulose 5-phosphate reductoisomerase, found in Xanthomonas oryzae pv. oryzae (strain PXO99A).